The sequence spans 241 residues: Cytochrome b6-f complex iron-sulfur subunit 2, cyanelle (241 aa).

The transit peptide at methionine 1–serine 62 directs the protein to the cyanelle. The helical transmembrane segment at leucine 83–valine 103 threads the bilayer. The 97-residue stretch at valine 127–alanine 223 folds into the Rieske domain. Positions 169, 171, 187, and 190 each coordinate [2Fe-2S] cluster. Cysteine 174 and cysteine 189 form a disulfide bridge.

The protein belongs to the Rieske iron-sulfur protein family. The 4 large subunits of the cytochrome b6-f complex are cytochrome b6, subunit IV (17 kDa polypeptide, petD), cytochrome f and the Rieske protein, while the 4 small subunits are petG, petL, petM and petN. The complex functions as a dimer. [2Fe-2S] cluster serves as cofactor.

Its subcellular location is the plastid. The protein localises to the cyanelle thylakoid membrane. The catalysed reaction is 2 oxidized [plastocyanin] + a plastoquinol + 2 H(+)(in) = 2 reduced [plastocyanin] + a plastoquinone + 4 H(+)(out). In terms of biological role, component of the cytochrome b6-f complex, which mediates electron transfer between photosystem II (PSII) and photosystem I (PSI), cyclic electron flow around PSI, and state transitions. This chain is Cytochrome b6-f complex iron-sulfur subunit 2, cyanelle (petC-2), found in Cyanophora paradoxa.